Reading from the N-terminus, the 1028-residue chain is MYFRVLLTPSSAMFDSFSFVRRLSYSPDLGRRIYGHVLPSHDQIHQRLLEICLGQCKLFKSRKVFDEMPQRLALALRIGKAVHSKSLILGIDSEGRLGNAIVDLYAKCAQVSYAEKQFDFLEKDVTAWNSMLSMYSSIGKPGKVLRSFVSLFENQIFPNKFTFSIVLSTCARETNVEFGRQIHCSMIKMGLERNSYCGGALVDMYAKCDRISDARRVFEWIVDPNTVCWTCLFSGYVKAGLPEEAVLVFERMRDEGHRPDHLAFVTVINTYIRLGKLKDARLLFGEMSSPDVVAWNVMISGHGKRGCETVAIEYFFNMRKSSVKSTRSTLGSVLSAIGIVANLDLGLVVHAEAIKLGLASNIYVGSSLVSMYSKCEKMEAAAKVFEALEEKNDVFWNAMIRGYAHNGESHKVMELFMDMKSSGYNIDDFTFTSLLSTCAASHDLEMGSQFHSIIIKKKLAKNLFVGNALVDMYAKCGALEDARQIFERMCDRDNVTWNTIIGSYVQDENESEAFDLFKRMNLCGIVSDGACLASTLKACTHVHGLYQGKQVHCLSVKCGLDRDLHTGSSLIDMYSKCGIIKDARKVFSSLPEWSVVSMNALIAGYSQNNLEEAVVLFQEMLTRGVNPSEITFATIVEACHKPESLTLGTQFHGQITKRGFSSEGEYLGISLLGMYMNSRGMTEACALFSELSSPKSIVLWTGMMSGHSQNGFYEEALKFYKEMRHDGVLPDQATFVTVLRVCSVLSSLREGRAIHSLIFHLAHDLDELTSNTLIDMYAKCGDMKGSSQVFDEMRRRSNVVSWNSLINGYAKNGYAEDALKIFDSMRQSHIMPDEITFLGVLTACSHAGKVSDGRKIFEMMIGQYGIEARVDHVACMVDLLGRWGYLQEADDFIEAQNLKPDARLWSSLLGACRIHGDDIRGEISAEKLIELEPQNSSAYVLLSNIYASQGCWEKANALRKVMRDRGVKKVPGYSWIDVEQRTHIFAAGDKSHSEIGKIEMFLEDLYDLMKDDAVVNPDIVEQGSLDCV.

The transit peptide at 1–30 (MYFRVLLTPSSAMFDSFSFVRRLSYSPDLG) directs the protein to the mitochondrion. 24 PPR repeats span residues 94 to 123 (EGRL…FLEK), 124 to 158 (DVTA…QIFP), 159 to 193 (NKFT…GLER), 194 to 224 (NSYC…IVDP), 225 to 259 (NTVC…GHRP), 260 to 290 (DHLA…MSSP), 291 to 325 (DVVA…SVKS), 326 to 360 (TRST…GLAS), 361 to 391 (NIYV…LEEK), 392 to 426 (NDVF…GYNI), 427 to 461 (DDFT…KLAK), 462 to 492 (NLFV…MCDR), 493 to 527 (DNVT…GIVS), 528 to 562 (DGAC…GLDR), 563 to 593 (DLHT…LPEW), 594 to 627 (SVVS…GVNP), 628 to 662 (SEIT…GFSS), 664 to 694 (GEYL…LSSP), 696 to 730 (SIVL…GVLP), 731 to 765 (DQAT…AHDL), 766 to 796 (DELT…MRRR), 798 to 832 (NVVS…HIMP), 833 to 863 (DEIT…MIGQ), and 869 to 899 (RVDH…QNLK). Residues 904–979 (LWSSLLGACR…VPGYSWIDVE (76 aa)) form a type E motif region. Residues 980-1010 (QRTHIFAAGDKSHSEIGKIEMFLEDLYDLMK) are type E(+) motif.

It belongs to the PPR family. PCMP-E subfamily.

Its subcellular location is the mitochondrion. The chain is Pentatricopeptide repeat-containing protein At3g09040, mitochondrial (PCMP-E88) from Arabidopsis thaliana (Mouse-ear cress).